The primary structure comprises 353 residues: Quinolinate synthase (353 aa).

Positions 47 and 68 each coordinate iminosuccinate. C113 contacts [4Fe-4S] cluster. Residues 139–141 (YAN) and S156 contribute to the iminosuccinate site. A [4Fe-4S] cluster-binding site is contributed by C200. Residues 226–228 (HPE) and T243 contribute to the iminosuccinate site. C297 serves as a coordination point for [4Fe-4S] cluster.

It belongs to the quinolinate synthase family. Type 1 subfamily. [4Fe-4S] cluster is required as a cofactor.

Its subcellular location is the cytoplasm. It carries out the reaction iminosuccinate + dihydroxyacetone phosphate = quinolinate + phosphate + 2 H2O + H(+). It functions in the pathway cofactor biosynthesis; NAD(+) biosynthesis; quinolinate from iminoaspartate: step 1/1. Its function is as follows. Catalyzes the condensation of iminoaspartate with dihydroxyacetone phosphate to form quinolinate. The sequence is that of Quinolinate synthase from Serratia proteamaculans (strain 568).